A 554-amino-acid polypeptide reads, in one-letter code: Urocanate hydratase (554 aa).

Residues 51–52 (GG), Q129, 175–177 (GMG), E195, 241–242 (NA), 262–266 (QTSAH), 272–273 (YL), and Y321 contribute to the NAD(+) site. C409 is an active-site residue. G491 provides a ligand contact to NAD(+).

Belongs to the urocanase family. It depends on NAD(+) as a cofactor.

The protein localises to the cytoplasm. The catalysed reaction is 4-imidazolone-5-propanoate = trans-urocanate + H2O. It functions in the pathway amino-acid degradation; L-histidine degradation into L-glutamate; N-formimidoyl-L-glutamate from L-histidine: step 2/3. Functionally, catalyzes the conversion of urocanate to 4-imidazolone-5-propionate. This is Urocanate hydratase from Methylobacterium nodulans (strain LMG 21967 / CNCM I-2342 / ORS 2060).